A 37-amino-acid polypeptide reads, in one-letter code: Large ribosomal subunit protein bL36 (37 aa).

This sequence belongs to the bacterial ribosomal protein bL36 family.

In Halalkalibacterium halodurans (strain ATCC BAA-125 / DSM 18197 / FERM 7344 / JCM 9153 / C-125) (Bacillus halodurans), this protein is Large ribosomal subunit protein bL36.